The chain runs to 432 residues: D-amino acid dehydrogenase (432 aa).

3-17 (VLVLGSGVIGTTTAY) is an FAD binding site.

This sequence belongs to the DadA oxidoreductase family. The cofactor is FAD.

It catalyses the reaction a D-alpha-amino acid + A + H2O = a 2-oxocarboxylate + AH2 + NH4(+). It functions in the pathway amino-acid degradation; D-alanine degradation; NH(3) and pyruvate from D-alanine: step 1/1. In terms of biological role, oxidative deamination of D-amino acids. The sequence is that of D-amino acid dehydrogenase from Azotobacter vinelandii (strain DJ / ATCC BAA-1303).